The sequence spans 179 residues: Large ribosomal subunit protein uL6 (179 aa).

The protein belongs to the universal ribosomal protein uL6 family. In terms of assembly, part of the 50S ribosomal subunit.

In terms of biological role, this protein binds to the 23S rRNA, and is important in its secondary structure. It is located near the subunit interface in the base of the L7/L12 stalk, and near the tRNA binding site of the peptidyltransferase center. The sequence is that of Large ribosomal subunit protein uL6 from Parasynechococcus marenigrum (strain WH8102).